The following is a 232-amino-acid chain: Chaperone protein LpfB (232 aa).

The N-terminal stretch at 1 to 23 (MNRSRLISCTALVLALIAQNSFA) is a signal peptide.

It belongs to the periplasmic pilus chaperone family.

Its subcellular location is the periplasm. Required for the biogenesis of long polar fimbria; binds and interact with LpfA. This is Chaperone protein LpfB (lpfB) from Salmonella typhimurium (strain LT2 / SGSC1412 / ATCC 700720).